Consider the following 1143-residue polypeptide: Serine/threonine-protein kinase BRI1-like 2 (1143 aa).

The N-terminal stretch at 1 to 31 is a signal peptide; the sequence is MTTSPIRVRIRTRIQISFIFLLTHLSQSSSS. Over 32–756 the chain is Extracellular; the sequence is DQSSLKTDSL…GTRAASWANS (725 aa). A Cys pair 1 motif is present at residues 68-75; that stretch reads CQFSGVTC. 24 LRR repeats span residues 77–101, 102–125, 126–150, 151–175, 177–200, 203–227, 228–250, 251–275, 277–299, 300–324, 326–349, 351–373, 374–398, 399–422, 424–446, 447–470, 472–493, 494–518, 520–542, 570–594, 610–634, 635–660, 662–681, and 682–707; these read GGRV…AFTS, LDSL…LLLL, PLTL…FFSK, YSNL…LFLS, KKLQ…TIPL, CVSM…LINC, TNLK…SFGE, LKLL…IGDT, RSLQ…SLSS, CSWL…ILRS, GSLQ…ISAC, SLRI…LCPG, AASL…ISQC, SELR…IGNL, KLEQ…IGKL, QNLK…FFNC, NIEW…DFGI, LSRL…LGKC, TLVW…LGRQ, VGGL…KSCD, YQTI…IGEM, IALQ…QLKN, GVFD…SFSN, and LSFL…QLST. 2 N-linked (GlcNAc...) asparagine glycosylation sites follow: asparagine 84 and asparagine 118. Asparagine 163, asparagine 188, asparagine 226, and asparagine 234 each carry an N-linked (GlcNAc...) asparagine glycan. Residues asparagine 288 and asparagine 312 are each glycosylated (N-linked (GlcNAc...) asparagine). Asparagine 412 is a glycosylation site (N-linked (GlcNAc...) asparagine). N-linked (GlcNAc...) asparagine glycosylation occurs at asparagine 469. Asparagine 506 carries an N-linked (GlcNAc...) asparagine glycan. An N-linked (GlcNAc...) asparagine glycan is attached at asparagine 681. The Cys pair 2 signature appears at 720–727; the sequence is CGVPLPEC. A helical transmembrane segment spans residues 757-777; sequence IVLGVLISAASVCILIVWAIA. Over 778 to 1143 the chain is Cytoplasmic; sequence VRARRRDADD…NNSHSHSNSL (366 aa). Threonine 835 bears the Phosphothreonine mark. Residues 838-1129 enclose the Protein kinase domain; the sequence is FSAASMIGHG…LQVVASLREL (292 aa). Residues 844–852 and lysine 866 each bind ATP; that span reads IGHGGFGEV. At tyrosine 911 the chain carries Phosphotyrosine. Residue aspartate 966 is the Proton acceptor of the active site. Serine 1001 is modified (phosphoserine). Tyrosine 1009 carries the phosphotyrosine modification.

Belongs to the protein kinase superfamily. Ser/Thr protein kinase family. As to quaternary structure, interacts with TTL3. In terms of tissue distribution, expressed in provascular and procambial sites throughout plant development. Expressed throughout globe- to heart-staged embryos. Then, it is restricted to procambial cells by the late torpedo stage, and this pattern persists throughout the duration of embryo development. After germination, it is expressed not only in procambial cells throughout the plant but also in all lateral organ primordia before the onset of vascularization.

Its subcellular location is the cell membrane. The enzyme catalyses L-seryl-[protein] + ATP = O-phospho-L-seryl-[protein] + ADP + H(+). It carries out the reaction L-threonyl-[protein] + ATP = O-phospho-L-threonyl-[protein] + ADP + H(+). Receptor with a serine/threonine-protein kinase activity, which may transduce extracellular spatial and temporal signals into downstream cell differentiation responses in provascular and procambial cells. In contrast to BRI1, BRL1 and BRL3, it does not bind brassinolide. This chain is Serine/threonine-protein kinase BRI1-like 2, found in Arabidopsis thaliana (Mouse-ear cress).